A 344-amino-acid polypeptide reads, in one-letter code: MTTTPLAPVAQARSLLQLTTAYHQAKALHSAVELGLFDLLADGPATAEEVKDRLRIVHPLAKEFLDALVALELLEADGDRYRNSPAAQAFLVSGASEYLGGTVLQHARKHYHVWAGLTTALQEGEAGSGAEAHGPEAYPKHYEDPERARQVMAHFDTFSSFTAEELARRVDWSGYGSFIDIGGARGNLATRVALAHPHLHGAVFDLPALAPLAGELIRERGLEGRVRFHGGDFLTDPLPSADAVVTGHVLPDWPVPQRRKLLARIHEALPSGGALVVYDLMTDPATTTVHDVLQRLNHGLIRGDSSSSSVEEYRAEIEEAGFRVRQAERIDNLLGDWLIVAVKP.

Residues D205 and 231 to 233 each bind S-adenosyl-L-methionine; that span reads GDF.

It belongs to the class I-like SAM-binding methyltransferase superfamily. Cation-independent O-methyltransferase family.

It carries out the reaction 4-amino-4-dedimethylamino-anhydrotetracycline + S-adenosyl-L-methionine = 4-methylamino-4-dedimethylamino-anhydrotetracycline + S-adenosyl-L-homocysteine + H(+). It catalyses the reaction 4-methylamino-4-dedimethylamino-anhydrotetracycline + S-adenosyl-L-methionine = anhydrotetracycline + S-adenosyl-L-homocysteine + H(+). The protein operates within antibiotic biosynthesis; oxytetracycline biosynthesis. Functionally, involved in the biosynthesis of the tetracycline antibiotic, oxytetracycline. Catalyzes the dimethylation of 4-amino-4-de(dimethylamino)anhydrotetracycline (4-amino-ATC) to yield anhydrotetracycline (ATC). Also able to catalyze the dimethylation of 7-chloro-, 6-demethyl-, 2-decarboxamido-2-nitrile-, and 4-methylamino-derivatives of 4-amino-4-de(dimethylamino)anhydrotetracycline. The polypeptide is N,N-dimethyltransferase OxyT (Streptomyces rimosus).